Consider the following 122-residue polypeptide: Large ribosomal subunit protein uL14 (122 aa).

The protein belongs to the universal ribosomal protein uL14 family. Part of the 50S ribosomal subunit. Forms a cluster with proteins L3 and L19. In the 70S ribosome, L14 and L19 interact and together make contacts with the 16S rRNA in bridges B5 and B8.

In terms of biological role, binds to 23S rRNA. Forms part of two intersubunit bridges in the 70S ribosome. This is Large ribosomal subunit protein uL14 from Lactococcus lactis subsp. lactis (strain IL1403) (Streptococcus lactis).